We begin with the raw amino-acid sequence, 1082 residues long: Importin-4 (1082 aa).

Methionine 1 is subject to N-acetylmethionine. The 67-residue stretch at 24–90 (ATEQLQTILR…KSLVLTALQK (67 aa)) folds into the Importin N-terminal domain. HEAT repeat units lie at residues 348–385 (KLCP…GAGD), 390–427 (RLLY…NLQP), 431–471 (SYSE…NLGP), 475–513 (PYLP…AAQD), 896–933 (QFVS…HGGC), and 937–975 (DHFP…ASPV).

Belongs to the importin beta family. Found in a cytosolic complex with ASF1 (ASF1A or ASF1B) and histones H3 and H4.

The protein localises to the cytoplasm. The protein resides in the nucleus. In terms of biological role, nuclear transport receptor that mediates nuclear import of proteins, such as histones, RPS3A, TNP2 and VDR. Serves as receptor for nuclear localization signals (NLS) in cargo substrates. Is thought to mediate docking of the importin/substrate complex to the nuclear pore complex (NPC) through binding to nucleoporin and the complex is subsequently translocated through the pore by an energy requiring, Ran-dependent mechanism. At the nucleoplasmic side of the NPC, Ran binds to the importin, the importin/substrate complex dissociates and importin is re-exported from the nucleus to the cytoplasm where GTP hydrolysis releases Ran. The directionality of nuclear import is thought to be conferred by an asymmetric distribution of the GTP- and GDP-bound forms of Ran between the cytoplasm and nucleus. Mediates the nuclear import of the histone H3-H4 dimer when in complex with ASF1 (ASF1A or ASF1B). Mediates the ligand-independent nuclear import of vitamin D receptor (VDR). This Mus musculus (Mouse) protein is Importin-4 (Ipo4).